We begin with the raw amino-acid sequence, 398 residues long: MELIKGNIASPKGFYADGKHAGLKRKRNDIGWIYSEVPANAAAVYTMNQMQAAPIFVTKDSFQSNAKLQAIIVNSGNANACTGNQGMLDALAMRAQTAEKLEIPLDSVAVASTGIIGDMLPMDKINAGIEMLEKQTGNAADFEEAILTTDTFQKQISFQTEIGGRKVTMSGVAKGSGMIHPNMATMLAFITTDAAIPAELLQKLLKIKVDKTFNQITVDGDTSTNDMVVVMANGCAENPMLQEGTADFAKFADMFQAVTEHLAKSIARDGEGATKLIEVQVNGATKTEDARMIAKKIVSSSLVKTAAFGGDGNWGRIICAIGYSGGRFAPDNITIKIGGIEILNHSSQTIYNQQALDAYLEEEHIIIEVDLHIGLESGTAWGCDLSYEYVKINACYRT.

Residues Thr148, Lys174, Thr185, Glu271, Asn393, and Thr398 each contribute to the substrate site. Thr185 serves as the catalytic Nucleophile.

Belongs to the ArgJ family. As to quaternary structure, heterotetramer of two alpha and two beta chains.

Its subcellular location is the cytoplasm. The catalysed reaction is N(2)-acetyl-L-ornithine + L-glutamate = N-acetyl-L-glutamate + L-ornithine. The enzyme catalyses L-glutamate + acetyl-CoA = N-acetyl-L-glutamate + CoA + H(+). The protein operates within amino-acid biosynthesis; L-arginine biosynthesis; L-ornithine and N-acetyl-L-glutamate from L-glutamate and N(2)-acetyl-L-ornithine (cyclic): step 1/1. Its pathway is amino-acid biosynthesis; L-arginine biosynthesis; N(2)-acetyl-L-ornithine from L-glutamate: step 1/4. In terms of biological role, catalyzes two activities which are involved in the cyclic version of arginine biosynthesis: the synthesis of N-acetylglutamate from glutamate and acetyl-CoA as the acetyl donor, and of ornithine by transacetylation between N(2)-acetylornithine and glutamate. In Listeria monocytogenes serovar 1/2a (strain ATCC BAA-679 / EGD-e), this protein is Arginine biosynthesis bifunctional protein ArgJ.